A 290-amino-acid polypeptide reads, in one-letter code: Microtubule-associated protein P320 (290 aa).

8 consecutive repeats follow at residues serine 1–proline 38, serine 39–proline 76, serine 77–proline 114, serine 115–proline 152, serine 153–proline 190, serine 191–proline 228, serine 229–proline 266, and serine 267–histidine 290. Residues serine 251 to histidine 290 form a disordered region. Basic and acidic residues predominate over residues glutamate 259 to histidine 290.

It localises to the cytoplasm. Its subcellular location is the cytoskeleton. This chain is Microtubule-associated protein P320, found in Trypanosoma brucei brucei.